Consider the following 910-residue polypeptide: Protein translocase subunit SecA (910 aa).

ATP-binding positions include Gln-87, 105-109 (GEGKT), and Asp-512. Composition is skewed to basic and acidic residues over residues 561–571 (RHESRRIDNQL), 841–853 (EEER…ELAR), and 880–890 (TFEREARKVGR). Disordered stretches follow at residues 561–584 (RHES…AGSS) and 835–910 (EEVD…GKIN). The Zn(2+) site is built by Cys-894, Cys-896, Cys-905, and His-906. Over residues 900–910 (KKYKQCHGKIN) the composition is skewed to basic residues.

The protein belongs to the SecA family. As to quaternary structure, monomer and homodimer. Part of the essential Sec protein translocation apparatus which comprises SecA, SecYEG and auxiliary proteins SecDF-YajC and YidC. Zn(2+) is required as a cofactor.

Its subcellular location is the cell inner membrane. It localises to the cytoplasm. The catalysed reaction is ATP + H2O + cellular proteinSide 1 = ADP + phosphate + cellular proteinSide 2.. Functionally, part of the Sec protein translocase complex. Interacts with the SecYEG preprotein conducting channel. Has a central role in coupling the hydrolysis of ATP to the transfer of proteins into and across the cell membrane, serving both as a receptor for the preprotein-SecB complex and as an ATP-driven molecular motor driving the stepwise translocation of polypeptide chains across the membrane. This Photobacterium profundum (strain SS9) protein is Protein translocase subunit SecA.